A 427-amino-acid chain; its full sequence is 3-isopropylmalate dehydratase large subunit (427 aa).

Positions 308, 368, and 371 each coordinate [4Fe-4S] cluster.

The protein belongs to the aconitase/IPM isomerase family. LeuC type 2 subfamily. In terms of assembly, heterodimer of LeuC and LeuD. [4Fe-4S] cluster serves as cofactor.

It carries out the reaction (2R,3S)-3-isopropylmalate = (2S)-2-isopropylmalate. It participates in amino-acid biosynthesis; L-leucine biosynthesis; L-leucine from 3-methyl-2-oxobutanoate: step 2/4. Its function is as follows. Catalyzes the isomerization between 2-isopropylmalate and 3-isopropylmalate, via the formation of 2-isopropylmaleate. The sequence is that of 3-isopropylmalate dehydratase large subunit from Citrifermentans bemidjiense (strain ATCC BAA-1014 / DSM 16622 / JCM 12645 / Bem) (Geobacter bemidjiensis).